We begin with the raw amino-acid sequence, 58 residues long: Small ribosomal subunit protein bS21 (58 aa).

This sequence belongs to the bacterial ribosomal protein bS21 family.

The sequence is that of Small ribosomal subunit protein bS21 from Staphylococcus saprophyticus subsp. saprophyticus (strain ATCC 15305 / DSM 20229 / NCIMB 8711 / NCTC 7292 / S-41).